The sequence spans 267 residues: Orotidine 5'-phosphate decarboxylase (267 aa).

Residue lysine 93 is the Proton donor of the active site.

Belongs to the OMP decarboxylase family. Type 2 subfamily.

It catalyses the reaction orotidine 5'-phosphate + H(+) = UMP + CO2. Its pathway is pyrimidine metabolism; UMP biosynthesis via de novo pathway; UMP from orotate: step 2/2. This chain is Orotidine 5'-phosphate decarboxylase, found in Halobacterium salinarum (strain ATCC 29341 / DSM 671 / R1).